Reading from the N-terminus, the 218-residue chain is Octanoyltransferase (218 aa).

One can recognise a BPL/LPL catalytic domain in the interval 31–206; it reads REAADEVWLV…QLVKHLDYAE (176 aa). Residues 70–77, 137–139, and 150–152 each bind substrate; these read RGGQVTYH, SLG, and GLA. Cys168 (acyl-thioester intermediate) is an active-site residue.

Belongs to the LipB family.

The protein localises to the cytoplasm. The catalysed reaction is octanoyl-[ACP] + L-lysyl-[protein] = N(6)-octanoyl-L-lysyl-[protein] + holo-[ACP] + H(+). It participates in protein modification; protein lipoylation via endogenous pathway; protein N(6)-(lipoyl)lysine from octanoyl-[acyl-carrier-protein]: step 1/2. In terms of biological role, catalyzes the transfer of endogenously produced octanoic acid from octanoyl-acyl-carrier-protein onto the lipoyl domains of lipoate-dependent enzymes. Lipoyl-ACP can also act as a substrate although octanoyl-ACP is likely to be the physiological substrate. In Pseudomonas syringae pv. syringae (strain B728a), this protein is Octanoyltransferase.